The primary structure comprises 121 residues: Large ribosomal subunit protein uL24 (121 aa).

It belongs to the universal ribosomal protein uL24 family. In terms of assembly, part of the 50S ribosomal subunit.

One of two assembly initiator proteins, it binds directly to the 5'-end of the 23S rRNA, where it nucleates assembly of the 50S subunit. Its function is as follows. Located at the polypeptide exit tunnel on the outside of the subunit. This Pyrococcus furiosus (strain ATCC 43587 / DSM 3638 / JCM 8422 / Vc1) protein is Large ribosomal subunit protein uL24.